We begin with the raw amino-acid sequence, 1083 residues long: MFSFEGDFKTRPKVSLGGASRKEEKASLLHRTQEERRKREEERRRLKNAVIIQSFIRGYRDRKQQYFIQRSAFDQCTDSAQPGGTFCLADGPNLTLLVRQLLFFYKQSEDSKRLIWLYQNLIKHSSLFVKQLDGSERLTCLFQIKRLMSLCCRLLQNCSDDSLNVALPMRMLEVFTSENTYLPVLQDSSYVVSVIEQILHYMVHSGYYRSLYLLINSKLPSSIEYSDLSRVPIAKILLENVLKPLHFTYSSCPEASRHQVFSAFTEEFLGAPFTDQIFHFVIPAFADAQTVFPYEPFLNALLLLESQSSKRCSGVPWLFYFVLTVGENYLGALSEDGLLVYLRVLQTFLSQLPASPTGTGCPDSTSDSEDDNEETDQPNSPEDGRVSAPYITEECLRKLDTKQQTNTLLNLVWRDSASEEVFTRMASICHTLMVQHRMMVPKVRLLYSLAFNARFLRHLWFLISSMTTQMITGSMVPLLQLISRGSPMSFEDSSRIIPLFYLFSSLFSHSLISIHDNEFFGDPIEVVGQRQSSMMPFTLEELILLSRCLRDACLGIIKLAYPETKPEVREEYVTAFQSIGVTTNSEMQQCIQMEQKRWVQLFKVITNLVKMLKSRDTRRNFCPPNHWLSEQEDIKADKVTQLYVPASRHVWRFRRMGRIGPLQSTLEVGLESLPLSVSEERQLAILTELPFVVPFEERVKIFQRLIYADKQEVQGDGPFLDGINVTIRRNYIYEDAYDKLSPENEPDLKKRIRVHLLNAHGLDEAGIDGGGIFREFLNELLKSGFNPNQGFFKTTNEGLLYPNPAAQMLVGDSFARHYYFLGRMLGKALYENMLVELPFAGFFLSKLLGTSADVDIHHLASLDPEVYRNLLFLKSYEEDVEELGLNFTVVNNDLGEAQVVELKFGGKDIPVTGANRIAYIHLVADYRLNKQIRPHCLAFRQGLANVVSLEWLRMFDQQEIQVLISGAQVPVSLEDLKSFTNYSGGYSADHPVIKIFWRVVEGFTDEEKRKLLKFVTSCSRPPLLGFKELYPAFCIHNGGSDLERLPTASTCMNLLKLPEFYDEALLRSKLLYAIECAAGFELS.

Composition is skewed to basic and acidic residues over residues 1–10 (MFSFEGDFKT) and 20–40 (SRKE…RKRE). Positions 1–40 (MFSFEGDFKTRPKVSLGGASRKEEKASLLHRTQEERRKRE) are disordered. Positions 1–60 (MFSFEGDFKTRPKVSLGGASRKEEKASLLHRTQEERRKREEERRRLKNAVIIQSFIRGYR) are cis-determinant of acceptor ubiquitin-binding. Positions 45–74 (RLKNAVIIQSFIRGYRDRKQQYFIQRSAFD) constitute an IQ domain. The interval 354–386 (ASPTGTGCPDSTSDSEDDNEETDQPNSPEDGRV) is disordered. The segment covering 366–376 (SDSEDDNEETD) has biased composition (acidic residues). Residues 744 to 1083 (NEPDLKKRIR…IECAAGFELS (340 aa)) enclose the HECT domain. Lys903 participates in a covalent cross-link: Glycyl lysine isopeptide (Lys-Gly) (interchain with G-Cter in ubiquitin); by autocatalysis. Cys1051 acts as the Glycyl thioester intermediate in catalysis.

This sequence belongs to the UBE3C family. As to quaternary structure, interacts with 26S proteasomes. Interacts (via the HECT domain) with UBE2D1 and, less efficiently, with UBE2L3. Autoubiquitinated; promoting its own degradation.

It catalyses the reaction S-ubiquitinyl-[E2 ubiquitin-conjugating enzyme]-L-cysteine + [acceptor protein]-L-lysine = [E2 ubiquitin-conjugating enzyme]-L-cysteine + N(6)-ubiquitinyl-[acceptor protein]-L-lysine.. The protein operates within protein modification; protein ubiquitination. In terms of biological role, E3 ubiquitin-protein ligase that specifically catalyzes 'Lys-29'- and 'Lys-48'-linked polyubiquitin chains. Accepts ubiquitin from the E2 ubiquitin-conjugating enzyme UBE2D1 in the form of a thioester and then directly transfers the ubiquitin to targeted substrates. Associates with the proteasome and promotes elongation of ubiquitin chains on substrates bound to the 26S proteasome. Also catalyzes 'Lys-29'- and 'Lys-48'-linked ubiquitination of 26S proteasome subunit ADRM1/RPN13 in response to proteotoxic stress, impairing the ability of the proteasome to bind and degrade ubiquitin-conjugated proteins. Acts as a negative regulator of autophagy by mediating 'Lys-29'- and 'Lys-48'-linked ubiquitination of PIK3C3/VPS34, promoting its degradation. Can assemble unanchored poly-ubiquitin chains in either 'Lys-29'- or 'Lys-48'-linked polyubiquitin chains; with some preference for 'Lys-48' linkages. Acts as a negative regulator of type I interferon by mediating 'Lys-48'-linked ubiquitination of IRF3 and IRF7, leading to their degradation by the proteasome. Catalyzes ubiquitination and degradation of CAND2. The protein is Ubiquitin-protein ligase E3C of Mus musculus (Mouse).